Reading from the N-terminus, the 266-residue chain is 4-hydroxy-tetrahydrodipicolinate reductase (266 aa).

An NAD(+)-binding site is contributed by 10–15 (GPRGRM). NADP(+) is bound at residue Lys-38. NAD(+) contacts are provided by residues 99-101 (GTT) and 125-128 (APNF). Catalysis depends on His-155, which acts as the Proton donor/acceptor. His-156 is a (S)-2,3,4,5-tetrahydrodipicolinate binding site. Lys-159 acts as the Proton donor in catalysis. 165 to 166 (GT) is a (S)-2,3,4,5-tetrahydrodipicolinate binding site.

The protein belongs to the DapB family.

Its subcellular location is the cytoplasm. It carries out the reaction (S)-2,3,4,5-tetrahydrodipicolinate + NAD(+) + H2O = (2S,4S)-4-hydroxy-2,3,4,5-tetrahydrodipicolinate + NADH + H(+). It catalyses the reaction (S)-2,3,4,5-tetrahydrodipicolinate + NADP(+) + H2O = (2S,4S)-4-hydroxy-2,3,4,5-tetrahydrodipicolinate + NADPH + H(+). Its pathway is amino-acid biosynthesis; L-lysine biosynthesis via DAP pathway; (S)-tetrahydrodipicolinate from L-aspartate: step 4/4. In terms of biological role, catalyzes the conversion of 4-hydroxy-tetrahydrodipicolinate (HTPA) to tetrahydrodipicolinate. The protein is 4-hydroxy-tetrahydrodipicolinate reductase of Bacillus cereus (strain B4264).